Here is a 147-residue protein sequence, read N- to C-terminus: D-aminoacyl-tRNA deacylase (147 aa).

The short motif at 136 to 137 is the Gly-cisPro motif, important for rejection of L-amino acids element; sequence GP.

It belongs to the DTD family. As to quaternary structure, homodimer.

The protein resides in the cytoplasm. The enzyme catalyses glycyl-tRNA(Ala) + H2O = tRNA(Ala) + glycine + H(+). It carries out the reaction a D-aminoacyl-tRNA + H2O = a tRNA + a D-alpha-amino acid + H(+). Its function is as follows. An aminoacyl-tRNA editing enzyme that deacylates mischarged D-aminoacyl-tRNAs. Also deacylates mischarged glycyl-tRNA(Ala), protecting cells against glycine mischarging by AlaRS. Acts via tRNA-based rather than protein-based catalysis; rejects L-amino acids rather than detecting D-amino acids in the active site. By recycling D-aminoacyl-tRNA to D-amino acids and free tRNA molecules, this enzyme counteracts the toxicity associated with the formation of D-aminoacyl-tRNA entities in vivo and helps enforce protein L-homochirality. In Streptococcus pneumoniae serotype 2 (strain D39 / NCTC 7466), this protein is D-aminoacyl-tRNA deacylase.